The primary structure comprises 261 residues: MFEARLIQGSILKKVLEALKDLINEACWDVSSGGVNLQSMDSSHVSLVQLTLRSEGFDTYRCDRNLAMGVNLTSMSKILKCAGNEDIITLRAEDNADTLALVFEAPNQEKVSDYEMKLMDLDVEQLGIPEQEYSCVIKMPSGEFARICRDLSHIGDAVVISCAKNGVKFSASGELGNGNIKLSQTSNVDKEEEAVTIEMNEPVHLTFALRYLNFFTKATPLSPTVTLSMSADVPLVVEYKIADMGHLKYYLAPKIEDEEAS.

Residues K14, K77, and K80 each carry the N6-acetyllysine modification. Residues 61 to 80 (RCDRNLAMGVNLTSMSKILK) mediate DNA binding. A disulfide bridge links C135 with C162. A Glycyl lysine isopeptide (Lys-Gly) (interchain with G-Cter in SUMO2); alternate cross-link involves residue K164. A Glycyl lysine isopeptide (Lys-Gly) (interchain with G-Cter in ubiquitin); alternate cross-link involves residue K164. A Phosphotyrosine; by EGFR modification is found at Y211. K248 is subject to N6-acetyllysine. K254 is covalently cross-linked (Glycyl lysine isopeptide (Lys-Gly) (interchain with G-Cter in SUMO2)).

The protein belongs to the PCNA family. As to quaternary structure, homotrimer. Interacts with p300/EP300; the interaction occurs on chromatin in UV-irradiated damaged cells. Interacts with CREBBP (via transactivation domain and C-terminus); the interaction occurs on chromatin in UV-irradiated damaged cells. Directly interacts with POLD1, POLD3 and POLD4 subunits of the DNA polymerase delta complex, POLD3 being the major interacting partner; the interaction with POLD3 is inhibited by CDKN1A/p21(CIP1). Forms a complex with activator 1 heteropentamer in the presence of ATP. Interacts with EXO1, POLH, POLK, DNMT1, ERCC5, FEN1, CDC6 and POLDIP2. Interacts with POLB. Interacts with APEX2; this interaction is triggered by reactive oxygen species and increased by misincorporation of uracil in nuclear DNA. Forms a ternary complex with DNTTIP2 and core histone. Interacts with KCTD10. Interacts with PPP1R15A. Interacts with SMARCA5/SNF2H. Interacts with BAZ1B/WSTF; the interaction is direct and is required for BAZ1B/WSTF binding to replication foci during S phase. Interacts with HLTF and SHPRH. Interacts with NUDT15; this interaction is disrupted in response to UV irradiation and acetylation. Interacts with CDKN1A/p21(CIP1) and CDT1; interacts via their PIP-box which also recruits the DCX(DTL) complex. The interaction with CDKN1A inhibits POLD3 binding. Interacts with DDX11. Interacts with EGFR; positively regulates PCNA. Interacts with PARPBP. Interacts (when ubiquitinated) with SPRTN; leading to enhance RAD18-mediated PCNA ubiquitination. Interacts (when polyubiquitinated) with ZRANB3. Interacts with SMARCAD1. Interacts with CDKN1C. Interacts with PCLAF (via PIP-box). Interacts with RTEL1 (via PIP-box); the interaction is direct and essential for the suppression of telomere fragility. Interacts with FAM111A (via PIP-box); the interaction is direct and required for PCNA loading on chromatin binding. Interacts with LIG1. Interacts with SETMAR. Interacts with ANKRD17. Interacts with FBXO18/FBH1 (via PIP-box); the interaction recruits the DCX(DTL) complex and promotes ubiquitination and degradation of FBXO18/FBH1. Interacts with POLN. Interacts with SDE2 (via PIP-box); the interaction is direct and prevents ultraviolet light induced monoubiquitination. Component of the replisome complex composed of at least DONSON, MCM2, MCM7, PCNA and TICRR; interaction at least with PCNA occurs during DNA replication. Interacts with MAPK15; the interaction is chromatin binding dependent and prevents MDM2-mediated PCNA destruction by inhibiting the association of PCNA with MDM2. Interacts with PARP10 (via PIP-box). Interacts with DDI2. Interacts with HMCES (via PIP-box). Interacts with TRAIP (via PIP-box). Interacts with UHRF2. Interacts with ALKBH2; this interaction is enhanced during the S-phase of the cell cycle. Interacts with ATAD5; the interaction promotes USP1-mediated PCNA deubiquitination. Interacts (when phosphorylated) with GRB2. Interacts with ANG. Interacts with nuclear UNG; this interaction mediates UNG recruitment to S-phase replication foci. Interacts with ERCC6L2 (via an atypical PIP-box); this interaction facilitates cenrtomeric localization of ERCC6L2. Post-translationally, phosphorylated. Phosphorylation at Tyr-211 by EGFR stabilizes chromatin-associated PCNA. In terms of processing, acetylated by CREBBP and p300/EP300; preferentially acetylated by CREBBP on Lys-80, Lys-13 and Lys-14 and on Lys-77 by p300/EP300 upon loading on chromatin in response to UV irradiation. Lysine acetylation disrupts association with chromatin, hence promoting PCNA ubiquitination and proteasomal degradation in response to UV damage in a CREBBP- and EP300-dependent manner. Acetylation disrupts interaction with NUDT15 and promotes degradation. Ubiquitinated. Following DNA damage, can be either monoubiquitinated to stimulate direct bypass of DNA lesions by specialized DNA polymerases or polyubiquitinated to promote recombination-dependent DNA synthesis across DNA lesions by template switching mechanisms. Following induction of replication stress, monoubiquitinated by the UBE2B-RAD18 complex on Lys-164, leading to recruit translesion (TLS) polymerases, which are able to synthesize across DNA lesions in a potentially error-prone manner. An error-free pathway also exists and requires non-canonical polyubiquitination on Lys-164 through 'Lys-63' linkage of ubiquitin moieties by the E2 complex UBE2N-UBE2V2 and the E3 ligases, HLTF, RNF8 and SHPRH. This error-free pathway, also known as template switching, employs recombination mechanisms to synthesize across the lesion, using as a template the undamaged, newly synthesized strand of the sister chromatid. Monoubiquitination at Lys-164 also takes place in undamaged proliferating cells, and is mediated by the DCX(DTL) complex, leading to enhance PCNA-dependent translesion DNA synthesis. Sumoylated during S phase. Post-translationally, methylated on glutamate residues by ARMT1.

Its subcellular location is the nucleus. Its function is as follows. Auxiliary protein of DNA polymerase delta and epsilon, is involved in the control of eukaryotic DNA replication by increasing the polymerase's processibility during elongation of the leading strand. Induces a robust stimulatory effect on the 3'-5' exonuclease and 3'-phosphodiesterase, but not apurinic-apyrimidinic (AP) endonuclease, APEX2 activities. Has to be loaded onto DNA in order to be able to stimulate APEX2. Plays a key role in DNA damage response (DDR) by being conveniently positioned at the replication fork to coordinate DNA replication with DNA repair and DNA damage tolerance pathways. Acts as a loading platform to recruit DDR proteins that allow completion of DNA replication after DNA damage and promote postreplication repair: Monoubiquitinated PCNA leads to recruitment of translesion (TLS) polymerases, while 'Lys-63'-linked polyubiquitination of PCNA is involved in error-free pathway and employs recombination mechanisms to synthesize across the lesion. The protein is Proliferating cell nuclear antigen (Pcna) of Mus musculus (Mouse).